Consider the following 201-residue polypeptide: Large ribosomal subunit protein uL4 (201 aa).

The interval 44–71 (RAQKTRAEVTGSGKKPWRQKGTGRARSG) is disordered.

This sequence belongs to the universal ribosomal protein uL4 family. Part of the 50S ribosomal subunit.

In terms of biological role, one of the primary rRNA binding proteins, this protein initially binds near the 5'-end of the 23S rRNA. It is important during the early stages of 50S assembly. It makes multiple contacts with different domains of the 23S rRNA in the assembled 50S subunit and ribosome. Functionally, forms part of the polypeptide exit tunnel. The chain is Large ribosomal subunit protein uL4 from Enterobacter sp. (strain 638).